We begin with the raw amino-acid sequence, 206 residues long: uncharacterized protein (206 aa).

This is an uncharacterized protein from Haemophilus influenzae (strain ATCC 51907 / DSM 11121 / KW20 / Rd).